We begin with the raw amino-acid sequence, 447 residues long: N-succinylarginine dihydrolase (447 aa).

Substrate contacts are provided by residues 19–28, Asn-110, and 137–138; these read AGLSFGNEAS and HR. The active site involves Glu-174. A substrate-binding site is contributed by Arg-214. His-250 is a catalytic residue. The substrate site is built by Asp-252 and Asn-365. Cys-371 acts as the Nucleophile in catalysis.

Belongs to the succinylarginine dihydrolase family. Homodimer.

The catalysed reaction is N(2)-succinyl-L-arginine + 2 H2O + 2 H(+) = N(2)-succinyl-L-ornithine + 2 NH4(+) + CO2. It participates in amino-acid degradation; L-arginine degradation via AST pathway; L-glutamate and succinate from L-arginine: step 2/5. Catalyzes the hydrolysis of N(2)-succinylarginine into N(2)-succinylornithine, ammonia and CO(2). The chain is N-succinylarginine dihydrolase from Acinetobacter baumannii (strain SDF).